The sequence spans 662 residues: Sodium/glucose cotransporter 1 (662 aa).

Residues 1–24 (MDSSTWSPATTATTEPLKPHERIR) lie on the Extracellular side of the membrane. The chain crosses the membrane as a helical span at residues 25–47 (NAADISVIVIYFVVVMAVGLWAM). Over 48-66 (CSTNRGTVGGFFLAGRSMV) the chain is Cytoplasmic. A helical transmembrane segment spans residues 67–90 (WWPVGASLFASNIGSGHFVGLAGT). The Extracellular segment spans residues 91–95 (GAAAG). A helical transmembrane segment spans residues 96-117 (IATGGFEWNALIWVVVLGWLFV). Over 118–139 (PIYIKAGVVTMPEYLRKRFGGK) the chain is Cytoplasmic. A helical membrane pass occupies residues 140-169 (RIQVYLSILSLMLYIFTKISADIFSGAIFI). Residues 170-176 (TLALGLD) are Extracellular-facing. The chain crosses the membrane as a helical span at residues 177–193 (LYLAIFLLLAITGLYTI). Topologically, residues 194 to 202 (TGGLAAVIY) are cytoplasmic. Residues 203-221 (TDTLQTAIMLVGSFILTGF) traverse the membrane as a helical segment. The Extracellular segment spans residues 222–275 (AFHEVGGYDAFMEKYMNAIPTVISDGNITIKKECYTPRADSFHIFRDPLKGDLP). N-linked (GlcNAc...) asparagine glycosylation occurs at asparagine 248. 5 disulfide bridges follow: cysteine 255–cysteine 511, cysteine 255–cysteine 608, cysteine 345–cysteine 351, cysteine 355–cysteine 361, and cysteine 517–cysteine 522. The helical transmembrane segment at 276 to 295 (WPGLTFGLSILALWYWCTDQ) threads the bilayer. At 296–309 (VIVQRCLSAKNMSH) the chain is on the cytoplasmic side. A helical transmembrane segment spans residues 310–331 (VKAGCVMCGYFKLLPMFVIVMP). Residues 332–375 (GMISRVLYTEKIACTVPSECEKYCGTKVGCSNIAYPTLVVELMP) are Extracellular-facing. Residues 376-406 (NGLRGLMLSVMLASLMSSLTSIFNSASTLFT) traverse the membrane as a helical segment. The Cytoplasmic segment spans residues 407-422 (MDVYTKIRKRASEKEL). The helical transmembrane segment at 423 to 444 (MIAGRLFILVLIGISIAWVPIV) threads the bilayer. Topologically, residues 445–451 (QSAQSGQ) are extracellular. Residues 452 to 477 (LFDYIQSVTSYLGPPIAAVFLLAIFC) traverse the membrane as a helical segment. The Cytoplasmic portion of the chain corresponds to 478–481 (KRVN). A helical transmembrane segment spans residues 482 to 504 (EEGAFWGLVIGCMIGLARMITEF). Over 505–525 (AYGTGSCVEPSNCPTIICGVH) the chain is Extracellular. A helical membrane pass occupies residues 526 to 547 (YLYFAIILFVISIIIVLVVSLF). At 548–642 (TKPIPDVHLY…TSEKPLWRTV (95 aa)) the chain is on the cytoplasmic side. The residue at position 587 (threonine 587) is a Phosphothreonine. Residues 643-660 (VNINGIILLTVAVFCHAY) form a helical membrane-spanning segment. Residues 661–662 (FA) are Extracellular-facing.

Belongs to the sodium:solute symporter (SSF) (TC 2.A.21) family. In terms of processing, N-glycosylation is not necessary for the cotransporter function.

The protein resides in the apical cell membrane. It carries out the reaction D-glucose(out) + 2 Na(+)(out) = D-glucose(in) + 2 Na(+)(in). The enzyme catalyses D-galactose(out) + 2 Na(+)(out) = D-galactose(in) + 2 Na(+)(in). With respect to regulation, enhanced by the interaction with PDZK1IP1/MAP17; but unlike SLC5A2/SGLT2, PDZK1IP1 is not essential for SLC5A1 transporter activity. Possibly modulated by cholesterol binding. Its function is as follows. Electrogenic Na(+)-coupled sugar symporter that actively transports D-glucose or D-galactose at the plasma membrane, with a Na(+) to sugar coupling ratio of 2:1. Transporter activity is driven by a transmembrane Na(+) electrochemical gradient set by the Na(+)/K(+) pump. Has a primary role in the transport of dietary monosaccharides from enterocytes to blood. Responsible for the absorption of D-glucose or D-galactose across the apical brush-border membrane of enterocytes, whereas basolateral exit is provided by GLUT2. Additionally, functions as a D-glucose sensor in enteroendocrine cells, triggering the secretion of the incretins GCG and GIP that control food intake and energy homeostasis. Together with SGLT2, functions in reabsorption of D-glucose from glomerular filtrate, playing a nonredundant role in the S3 segment of the proximal tubules. Transports D-glucose into endometrial epithelial cells, controlling glycogen synthesis and nutritional support for the embryo as well as the decidual transformation of endometrium prior to conception. Acts as a water channel enabling passive water transport in response to the osmotic gradient created upon sugar and Na(+) uptake. Has high water conductivity comparable to aquaporins and therefore is expected to play an important role in transepithelial water permeability, especially in the small intestine. The protein is Sodium/glucose cotransporter 1 (SLC5A1) of Sus scrofa (Pig).